Reading from the N-terminus, the 285-residue chain is MATLLNGKELSEELKQKMKIEVDELKEKGLTPHLTVILVGDNPASKSYVKGKEKACAVTGISSNLIELPENISQDELLQIIDEQNNDDSVHGILVQLPLPDQMDEQKIIHAISPAKDVDGFHPINVGKMMTGEDTFIPCTPYGILTMLRSKDISLEGKHAVIIGRSNIVGKPIGLLLLQENATVTYTHSRTKNLQEITKQADILIVAIGRAHAINADYIKEDAVVIDVGINRKDDGKLTGDVDFESAEQKASYITPVPRGVGPMTITMLLKNTIKAAKGLNDVER.

NADP(+)-binding positions include 164–166 (GRS), S189, and I230.

Belongs to the tetrahydrofolate dehydrogenase/cyclohydrolase family. As to quaternary structure, homodimer.

It catalyses the reaction (6R)-5,10-methylene-5,6,7,8-tetrahydrofolate + NADP(+) = (6R)-5,10-methenyltetrahydrofolate + NADPH. The enzyme catalyses (6R)-5,10-methenyltetrahydrofolate + H2O = (6R)-10-formyltetrahydrofolate + H(+). Its pathway is one-carbon metabolism; tetrahydrofolate interconversion. Catalyzes the oxidation of 5,10-methylenetetrahydrofolate to 5,10-methenyltetrahydrofolate and then the hydrolysis of 5,10-methenyltetrahydrofolate to 10-formyltetrahydrofolate. This is Bifunctional protein FolD from Oceanobacillus iheyensis (strain DSM 14371 / CIP 107618 / JCM 11309 / KCTC 3954 / HTE831).